The primary structure comprises 306 residues: Aspartate carbamoyltransferase catalytic subunit (306 aa).

Residues R55 and T56 each coordinate carbamoyl phosphate. K84 is a binding site for L-aspartate. Carbamoyl phosphate contacts are provided by R105, H133, and Q136. L-aspartate-binding residues include R166 and R227. The carbamoyl phosphate site is built by L265 and P266.

The protein belongs to the aspartate/ornithine carbamoyltransferase superfamily. ATCase family. In terms of assembly, heterododecamer (2C3:3R2) of six catalytic PyrB chains organized as two trimers (C3), and six regulatory PyrI chains organized as three dimers (R2).

The catalysed reaction is carbamoyl phosphate + L-aspartate = N-carbamoyl-L-aspartate + phosphate + H(+). The protein operates within pyrimidine metabolism; UMP biosynthesis via de novo pathway; (S)-dihydroorotate from bicarbonate: step 2/3. Its function is as follows. Catalyzes the condensation of carbamoyl phosphate and aspartate to form carbamoyl aspartate and inorganic phosphate, the committed step in the de novo pyrimidine nucleotide biosynthesis pathway. This chain is Aspartate carbamoyltransferase catalytic subunit, found in Neisseria gonorrhoeae (strain ATCC 700825 / FA 1090).